A 573-amino-acid chain; its full sequence is O-fucosyltransferase 20 (573 aa).

The Cytoplasmic segment spans residues 1 to 60 (MALSKNSNSNSFNKKKVSYISVPSQIINSLSSSSLQSLLVSPKKSSRSTNRFSFSYRNPR). The chain crosses the membrane as a helical; Signal-anchor for type II membrane protein span at residues 61-81 (IWFFTLFLVSLFGMLKLGFNV). The Lumenal segment spans residues 82-573 (DPISLPFSRY…RQQQEQQSDA (492 aa)). Asn138 is a glycosylation site (N-linked (GlcNAc...) asparagine). Substrate is bound at residue 344–346 (HLR). Asn385 and Asn517 each carry an N-linked (GlcNAc...) asparagine glycan. A compositionally biased stretch (basic and acidic residues) spans 547–556 (AGKDVTKHPV). Residues 547–573 (AGKDVTKHPVPECMCSDRQQQEQQSDA) form a disordered region. Positions 563-573 (DRQQQEQQSDA) are enriched in polar residues.

It belongs to the glycosyltransferase GT106 family. In terms of assembly, interacts with RACK1A. In terms of tissue distribution, highly expressed in shoot apical meristem (SAM) and in young vegetative tissues.

It localises to the golgi apparatus membrane. Its pathway is glycan metabolism. In terms of biological role, may play a role in the biosynthesis of matrix polysaccharides and contribute to the biomechanics and development of the plant cell wall. The polypeptide is O-fucosyltransferase 20 (Arabidopsis thaliana (Mouse-ear cress)).